Consider the following 617-residue polypeptide: Acetolactate synthase large subunit (617 aa).

Residue Glu71 coordinates thiamine diphosphate. FAD-binding positions include Arg173, 281 to 302 (HGTA…VGAR), and 324 to 343 (EIDP…VLGD). Positions 413–492 (QHQMWAAQHL…VKVVIVNNHW (80 aa)) are thiamine pyrophosphate binding. 2 residues coordinate Mg(2+): Asp463 and Asn490.

This sequence belongs to the TPP enzyme family. As to quaternary structure, dimer of large and small chains. The cofactor is Mg(2+). Thiamine diphosphate serves as cofactor.

It catalyses the reaction 2 pyruvate + H(+) = (2S)-2-acetolactate + CO2. The protein operates within amino-acid biosynthesis; L-isoleucine biosynthesis; L-isoleucine from 2-oxobutanoate: step 1/4. It participates in amino-acid biosynthesis; L-valine biosynthesis; L-valine from pyruvate: step 1/4. The chain is Acetolactate synthase large subunit (ilvB) from Parasynechococcus marenigrum (strain WH8102).